The chain runs to 105 residues: MATLQQQKIRIRLQAFDRRLLDTSCEKIVDTANRTNATAIGPIPLPTKRKIYCVLRSPHVDKDSREHFETRTHRRIIDIYQPSSKTIDALMKLDLPSGVDIEVKL.

Belongs to the universal ribosomal protein uS10 family. As to quaternary structure, part of the 30S ribosomal subunit.

Involved in the binding of tRNA to the ribosomes. The polypeptide is Small ribosomal subunit protein uS10 (Trichormus variabilis (strain ATCC 29413 / PCC 7937) (Anabaena variabilis)).